The primary structure comprises 562 residues: Probable malate:quinone oxidoreductase (562 aa).

Residues 535–562 are disordered; sequence SATPADPTIAPKNQHSTTYNANSEMQAL. Over residues 545–562 the composition is skewed to polar residues; that stretch reads PKNQHSTTYNANSEMQAL.

Belongs to the MQO family. It depends on FAD as a cofactor.

It catalyses the reaction (S)-malate + a quinone = a quinol + oxaloacetate. It participates in carbohydrate metabolism; tricarboxylic acid cycle; oxaloacetate from (S)-malate (quinone route): step 1/1. The sequence is that of Probable malate:quinone oxidoreductase from Xylella fastidiosa (strain M23).